A 158-amino-acid chain; its full sequence is ATP synthase subunit b', chloroplastic (158 aa).

Residues 21–41 form a helical membrane-spanning segment; that stretch reads GTLPLMALQFLILMLLLNTIF.

It belongs to the ATPase B chain family. F-type ATPases have 2 components, F(1) - the catalytic core - and F(0) - the membrane proton channel. F(1) has five subunits: alpha(3), beta(3), gamma(1), delta(1), epsilon(1). F(0) has four main subunits: a(1), b(1), b'(1) and c(10-14). The alpha and beta chains form an alternating ring which encloses part of the gamma chain. F(1) is attached to F(0) by a central stalk formed by the gamma and epsilon chains, while a peripheral stalk is formed by the delta, b and b' chains.

Its subcellular location is the plastid. The protein resides in the chloroplast thylakoid membrane. In terms of biological role, f(1)F(0) ATP synthase produces ATP from ADP in the presence of a proton or sodium gradient. F-type ATPases consist of two structural domains, F(1) containing the extramembraneous catalytic core and F(0) containing the membrane proton channel, linked together by a central stalk and a peripheral stalk. During catalysis, ATP synthesis in the catalytic domain of F(1) is coupled via a rotary mechanism of the central stalk subunits to proton translocation. Its function is as follows. Component of the F(0) channel, it forms part of the peripheral stalk, linking F(1) to F(0). The b'-subunit is a diverged and duplicated form of b found in plants and photosynthetic bacteria. This chain is ATP synthase subunit b', chloroplastic, found in Porphyra purpurea (Red seaweed).